Here is a 320-residue protein sequence, read N- to C-terminus: Protein phosphatase PTC7 homolog fig (320 aa).

A PPM-type phosphatase domain is found at 49–315 (PYLVTAVQGR…DDITLILASV (267 aa)). The Mn(2+) site is built by Asp93, Gly94, and Asp238.

The protein belongs to the PP2C family. It depends on Mg(2+) as a cofactor. The cofactor is Mn(2+).

The catalysed reaction is O-phospho-L-seryl-[protein] + H2O = L-seryl-[protein] + phosphate. It carries out the reaction O-phospho-L-threonyl-[protein] + H2O = L-threonyl-[protein] + phosphate. The polypeptide is Protein phosphatase PTC7 homolog fig (Drosophila yakuba (Fruit fly)).